The chain runs to 147 residues: Large ribosomal subunit protein uL22 (147 aa).

A disordered region spans residues 110-147 (EEKKTVAKKAPAAKKTTTTKAPAKKTTSTKKATAKKES). The span at 117–140 (KKAPAAKKTTTTKAPAKKTTSTKK) shows a compositional bias: low complexity.

It belongs to the universal ribosomal protein uL22 family. In terms of assembly, part of the 50S ribosomal subunit.

Functionally, this protein binds specifically to 23S rRNA; its binding is stimulated by other ribosomal proteins, e.g. L4, L17, and L20. It is important during the early stages of 50S assembly. It makes multiple contacts with different domains of the 23S rRNA in the assembled 50S subunit and ribosome. Its function is as follows. The globular domain of the protein is located near the polypeptide exit tunnel on the outside of the subunit, while an extended beta-hairpin is found that lines the wall of the exit tunnel in the center of the 70S ribosome. The polypeptide is Large ribosomal subunit protein uL22 (Campylobacter jejuni subsp. jejuni serotype O:23/36 (strain 81-176)).